A 483-amino-acid polypeptide reads, in one-letter code: Phloretin 2'-O-glucosyltransferase (483 aa).

Residue histidine 15 is the Proton acceptor of the active site. Histidine 15 provides a ligand contact to an anthocyanidin. The Charge relay role is filled by aspartate 118. UDP-alpha-D-glucose contacts are provided by threonine 140, alanine 360, glutamine 362, histidine 377, tryptophan 380, asparagine 381, serine 382, and glutamate 385. Alanine 400 contacts an anthocyanidin. UDP-alpha-D-glucose contacts are provided by glutamate 401 and glutamine 402.

It belongs to the UDP-glycosyltransferase family.

It catalyses the reaction phloretin + UDP-alpha-D-glucose = phlorizin + UDP + H(+). In terms of biological role, glycosyltransferase that possesses phloretin 2'-O-glycosyltransferase activity. Converts phloretin to phlorizin (phloretin 2'-O-glucoside), a potent antioxidant. Is specific for phloretin and does not possess glycosyltransferase activity toward caffeic acid, catechin, chlorogenic acid, 2-coumaric acid, 3-coumaric acid, 4-coumaric acid, cyanidin, 3,4-dihydroxyhydrocinnamic acid, epicatechin, 3-hydroxybenzoic acid, naringenin, 3,4-dihydroxybenzoic acid, quercetin and rutin. Can glycosylate phloretin in the presence of UDP-glucose, UDP-xylose and UDP-galactose. The chain is Phloretin 2'-O-glucosyltransferase from Malus domestica (Apple).